The following is a 766-amino-acid chain: Probable beta-glucosidase K (766 aa).

Asn19 carries N-linked (GlcNAc...) asparagine glycosylation. Residue Asp196 is part of the active site. Residues Asn288, Asn453, and Asn748 are each glycosylated (N-linked (GlcNAc...) asparagine). Residues 369–528 enclose the PA14 domain; it reads EGQPGLGMRF…DPERAIARAV (160 aa). The disordered stretch occupies residues 726 to 766; it reads LGRRGRSGSSPAVYRGRSNNVVNRTSHQGAQRISKGGFAAR. Over residues 742 to 756 the composition is skewed to polar residues; it reads RSNNVVNRTSHQGAQ.

It belongs to the glycosyl hydrolase 3 family.

The protein resides in the secreted. It catalyses the reaction Hydrolysis of terminal, non-reducing beta-D-glucosyl residues with release of beta-D-glucose.. The protein operates within glycan metabolism; cellulose degradation. Its function is as follows. Beta-glucosidases are one of a number of cellulolytic enzymes involved in the degradation of cellulosic biomass. Catalyzes the last step releasing glucose from the inhibitory cellobiose. The sequence is that of Probable beta-glucosidase K (bglK) from Aspergillus fumigatus (strain CBS 144.89 / FGSC A1163 / CEA10) (Neosartorya fumigata).